The chain runs to 321 residues: L-carnitine dehydrogenase (321 aa).

14-19 (GSGVIG) contributes to the NAD(+) binding site.

It belongs to the 3-hydroxyacyl-CoA dehydrogenase family. L-carnitine dehydrogenase subfamily. Homodimer.

It is found in the cytoplasm. It catalyses the reaction carnitine + NAD(+) = 3-dehydrocarnitine + NADH + H(+). Its pathway is amine and polyamine metabolism; carnitine metabolism. Its activity is regulated as follows. Analogs of L-carnitine such as D-carnitine, glycine betaine and choline, are competitive inhibitors of L-carnitine oxidation. In terms of biological role, catalyzes the NAD(+)-dependent oxidation of L-carnitine to 3-dehydrocarnitine. Is specific for L-carnitine and NAD(+) as substrates. D,L-3-hydroxybutyrate, L-lactate, ethanol, L-malate and D,L-isocitrate are not substrates. Is involved in a L-carnitine degradation pathway that allows P.aeruginosa to grow on L-carnitine as the sole source of carbon and nitrogen. In Pseudomonas aeruginosa (strain ATCC 15692 / DSM 22644 / CIP 104116 / JCM 14847 / LMG 12228 / 1C / PRS 101 / PAO1), this protein is L-carnitine dehydrogenase.